A 129-amino-acid polypeptide reads, in one-letter code: Putative transmembrane protein 10 (129 aa).

A run of 3 helical transmembrane segments spans residues 3–23, 27–47, and 85–105; these read NFSYFSTIFSIALMSSNAFAG, LLVGFCPCIEINTLTLFLSSL, and SSVLSCFTSCFVIYFYPFFVF.

It is found in the host membrane. The sequence is that of Putative transmembrane protein 10 (SIFV0010) from Sulfolobus islandicus filamentous virus (isolate Iceland/Hveragerdi) (SIFV).